Consider the following 539-residue polypeptide: Cell division control protein 6 homolog (539 aa).

Residues 1–40 (MPAIAGPSSSPQKHVVGSRSESIGGVRSAEVNTSRKRKLI) are disordered. The Nuclear localization signal motif lies at 35–38 (RKRK).

The protein belongs to the CDC6/cdc18 family. As to expression, highly expressed in roots, flower buds and etiolated seedlings. Expressed in leaves and stems. Highly expressed in proliferating cells such as root meristems, leaf primordia and young growing leaves, as well as cells undergoing endoreduplication cycles.

It localises to the nucleus. Its function is as follows. May be involved in the initiation of DNA replication. May play a role in endoreduplication. Could act as one of the factors that contributes to maintain endoreduplication competence. The protein is Cell division control protein 6 homolog of Arabidopsis thaliana (Mouse-ear cress).